The primary structure comprises 480 residues: MSRYFSFFFLALFLHYRIIVASPFEGFDAEEDDVTDDSSHLLHHSLPPPLLTQSHSSLSDPDPEPEPSSAECKSDLITESDLEHQSDSKTPSSTPFEYWDEDEFEGLPVEIETLESPLITENGTHADPKTPDLKTSSEAQGDTNDQTKKKKSYAVEIACVCFLIALAINYFVGKRENESLALAWAAKFASKDTIFQKNFSMLGVSELEDSPLLLKEALNVFKFYASGRRYCHGLLATMELKSRHDLISRVFNLVVPCKDEITFEVYMNEETMDHVVFAMTKKKAAKTMQKEMRDLQRFAGIVSPPAGRKWVSEEFALISESKEVAADLITDTVLDQVFGDKAVDKYGKNFMSMHISDQHPGKHKKMMLFKFSLPDAKHMDDIVRLVALIPYYIDLVGRYRLSSQARNKTESGRQKAAEEAYKELHNARQEALQKKKAEKKKMMEEAEAKMSAEVIRKKEAKERARQVKKAVPKMKMSRSH.

A signal peptide spans 1-21 (MSRYFSFFFLALFLHYRIIVA). 2 disordered regions span residues 38-72 (SSHLLHHSLPPPLLTQSHSSLSDPDPEPEPSSAEC) and 116-147 (SPLITENGTHADPKTPDLKTSSEAQGDTNDQT). The segment covering 51–60 (LTQSHSSLSD) has biased composition (low complexity). Polar residues predominate over residues 133–144 (LKTSSEAQGDTN). The helical transmembrane segment at 153–173 (YAVEIACVCFLIALAINYFVG) threads the bilayer. Positions 404–480 (QARNKTESGR…VPKMKMSRSH (77 aa)) are disordered. A compositionally biased stretch (basic and acidic residues) spans 407 to 465 (NKTESGRQKAAEEAYKELHNARQEALQKKKAEKKKMMEEAEAKMSAEVIRKKEAKERAR). The stretch at 411-467 (SGRQKAAEEAYKELHNARQEALQKKKAEKKKMMEEAEAKMSAEVIRKKEAKERARQV) forms a coiled coil. Basic residues predominate over residues 466 to 480 (QVKKAVPKMKMSRSH).

The protein localises to the membrane. This is an uncharacterized protein from Arabidopsis thaliana (Mouse-ear cress).